The sequence spans 206 residues: Small ribosomal subunit protein eS1 (206 aa).

This sequence belongs to the eukaryotic ribosomal protein eS1 family.

The chain is Small ribosomal subunit protein eS1 from Natronomonas pharaonis (strain ATCC 35678 / DSM 2160 / CIP 103997 / JCM 8858 / NBRC 14720 / NCIMB 2260 / Gabara) (Halobacterium pharaonis).